Here is a 91-residue protein sequence, read N- to C-terminus: Mercuric transport protein periplasmic component (91 aa).

The first 19 residues, 1–19, serve as a signal peptide directing secretion; the sequence is MKKLFASLALAAFVAPVFA. The HMA domain occupies 22 to 88; the sequence is QTVTLSVPGM…ATEDAGYPSS (67 aa). Hg(2+) is bound by residues Cys-33 and Cys-36.

This sequence belongs to the MerP family. In terms of assembly, monomer.

The protein localises to the periplasm. In terms of biological role, involved in mercury resistance. Acts as a mercury scavenger that specifically binds to a mercuric ion in the periplasm and probably passes it to the cytoplasmic mercuric reductase MerA via the mercuric transport protein MerT. In Acinetobacter calcoaceticus, this protein is Mercuric transport protein periplasmic component.